The following is a 372-amino-acid chain: Alpha-L-fucosidase 3 (372 aa).

Positions 1 to 23 (MNPILSSLFALSLLSSLSPSTHA) are cleaved as a signal peptide. Serine 37 (nucleophile) is an active-site residue. N-linked (GlcNAc...) asparagine glycosylation is found at asparagine 96, asparagine 114, asparagine 139, and asparagine 182. Active-site residues include aspartate 345 and histidine 348.

The protein belongs to the 'GDSL' lipolytic enzyme family. In terms of tissue distribution, high expression in younger leaves and in the apical region of the inflorescence stem.

The protein localises to the secreted. The protein resides in the extracellular space. It localises to the apoplast. The enzyme catalyses an alpha-L-fucoside + H2O = L-fucose + an alcohol. In terms of biological role, hydrolyzes alpha-1,2-linked fucose. Also active on fucosylated xyloglucan oligosaccharides. This Arabidopsis thaliana (Mouse-ear cress) protein is Alpha-L-fucosidase 3 (FXG1).